Consider the following 301-residue polypeptide: Protein translocase subunit SecF (301 aa).

A run of 6 helical transmembrane segments spans residues 17 to 37 (YIALALSCIMIILGIFAIFQI), 137 to 157 (DALFAILAATAGILIYIAIRF), 163 to 183 (IGATVATFHDVMAVLGIFYIL), 190 to 210 (IFISALLTIAGYSLTDTVVVF), 239 to 261 (LSRTIVTSLTTLMAAVALFFFGG), and 272 to 292 (ILGILVGTYSSIFVASPVVLL).

This sequence belongs to the SecD/SecF family. SecF subfamily. In terms of assembly, forms a complex with SecD. Part of the essential Sec protein translocation apparatus which comprises SecA, SecYEG and auxiliary proteins SecDF. Other proteins may also be involved.

The protein resides in the cell inner membrane. Functionally, part of the Sec protein translocase complex. Interacts with the SecYEG preprotein conducting channel. SecDF uses the proton motive force (PMF) to complete protein translocation after the ATP-dependent function of SecA. This is Protein translocase subunit SecF from Thermodesulfovibrio yellowstonii (strain ATCC 51303 / DSM 11347 / YP87).